The sequence spans 562 residues: Formate--tetrahydrofolate ligase (562 aa).

71–78 (TPAGEGKS) contacts ATP.

This sequence belongs to the formate--tetrahydrofolate ligase family.

The enzyme catalyses (6S)-5,6,7,8-tetrahydrofolate + formate + ATP = (6R)-10-formyltetrahydrofolate + ADP + phosphate. Its pathway is one-carbon metabolism; tetrahydrofolate interconversion. This chain is Formate--tetrahydrofolate ligase, found in Bacillus cereus (strain ATCC 10987 / NRS 248).